The chain runs to 612 residues: DNA mismatch repair protein MutL (612 aa).

The protein belongs to the DNA mismatch repair MutL/HexB family.

Its function is as follows. This protein is involved in the repair of mismatches in DNA. It is required for dam-dependent methyl-directed DNA mismatch repair. May act as a 'molecular matchmaker', a protein that promotes the formation of a stable complex between two or more DNA-binding proteins in an ATP-dependent manner without itself being part of a final effector complex. The sequence is that of DNA mismatch repair protein MutL from Bartonella quintana (strain Toulouse) (Rochalimaea quintana).